We begin with the raw amino-acid sequence, 154 residues long: UPF0178 protein GDI0551/Gdia_1457 (154 aa).

Belongs to the UPF0178 family.

The chain is UPF0178 protein GDI0551/Gdia_1457 from Gluconacetobacter diazotrophicus (strain ATCC 49037 / DSM 5601 / CCUG 37298 / CIP 103539 / LMG 7603 / PAl5).